The following is a 277-amino-acid chain: MELIEKHASFGGWQNVYRHYSQSLKCEMNVGVYLPPKAGNEKLPVLYWLSGLTCNEQNFITKSGMQRYAAEHNIIVVAPDTSPRGSHVADADRYDLGQGAGFYLNATQAPWNEHYKMYDYIHNELPDLVMQHFPATTRKSISGHSMGGLGALVLALRNPDEYVSVSAFSPIVSPSQVPWGQQAFAAYLGENKEAWLDYDPVSLISQGQRVAEIMVDQGLSDDFYAEQLRTPNLEKICQEMNIKTLIRYHEGYDHSYYFVSSFIGEHIAYHANKLNMR.

Active-site charge relay system residues include serine 145, aspartate 221, and histidine 254.

This sequence belongs to the esterase D family.

It carries out the reaction S-formylglutathione + H2O = formate + glutathione + H(+). Serine hydrolase involved in the detoxification of formaldehyde. Hydrolyzes S-formylglutathione to glutathione and formate. The chain is S-formylglutathione hydrolase FrmB (frmB) from Escherichia coli (strain SMS-3-5 / SECEC).